Reading from the N-terminus, the 310-residue chain is Malate dehydrogenase (310 aa).

Residues G7–G12 and D32 each bind NAD(+). Substrate-binding residues include R81 and R87. Residues N94 and V117–N119 contribute to the NAD(+) site. Substrate contacts are provided by N119 and R150. H174 acts as the Proton acceptor in catalysis.

Belongs to the LDH/MDH superfamily. MDH type 3 family.

It carries out the reaction (S)-malate + NAD(+) = oxaloacetate + NADH + H(+). Catalyzes the reversible oxidation of malate to oxaloacetate. The sequence is that of Malate dehydrogenase from Chlorobium luteolum (strain DSM 273 / BCRC 81028 / 2530) (Pelodictyon luteolum).